The sequence spans 208 residues: Small ribosomal subunit protein uS4 (208 aa).

The S4 RNA-binding domain maps to 98-158 (RRLDNVVYRL…EKSRKIACIN (61 aa)).

This sequence belongs to the universal ribosomal protein uS4 family. Part of the 30S ribosomal subunit. Contacts protein S5. The interaction surface between S4 and S5 is involved in control of translational fidelity.

Its function is as follows. One of the primary rRNA binding proteins, it binds directly to 16S rRNA where it nucleates assembly of the body of the 30S subunit. Functionally, with S5 and S12 plays an important role in translational accuracy. This chain is Small ribosomal subunit protein uS4, found in Geobacter metallireducens (strain ATCC 53774 / DSM 7210 / GS-15).